The primary structure comprises 88 residues: Mitochondrial import inner membrane translocase subunit Tim10 (88 aa).

The short motif at 25 to 49 (CSAKCISKYNEGDLNVGESVCAERC) is the Twin CX3C motif element. Disulfide bonds link C25-C49 and C29-C45. The segment at 63-88 (KMSGTQPGQEVPQEAPAAAPEKKGWF) is disordered. Positions 68–81 (QPGQEVPQEAPAAA) are enriched in low complexity.

Belongs to the small Tim family. Heterohexamer; composed of 3 copies of timm9 and 3 copies of timm10, named soluble 70 kDa complex. Associates directly with the TIM22 complex, whose core is composed of timm22. Interacts with the transmembrane regions of multi-pass transmembrane proteins in transit.

It localises to the mitochondrion inner membrane. Functionally, component of the TIM22 complex, a complex that mediates the import and insertion of multi-pass transmembrane proteins into the mitochondrial inner membrane. The TIM22 complex forms a twin-pore translocase that uses the membrane potential as external driving force. The polypeptide is Mitochondrial import inner membrane translocase subunit Tim10 (timm10) (Dictyostelium discoideum (Social amoeba)).